Here is a 440-residue protein sequence, read N- to C-terminus: VLVAGSLSLVTIIGNILVMVSIKVNRHLQTVNNYFLFSLACADLIIGVFSMNLYTLYTVIGYWPLGPVVCDLWLALDYVVSNASVMNLLIISFDRYFCVTKPLTYPVKRTTKMAGMMIAAAWVLSFILWAPAILFWQFIVGVRTVEDGECYIQFFSNAAVTFGTAIAAFYLPVIIMTVLYWHISRASKSRIKKDKKEPVANQDPVSPSLVQGRIVKPNNNNMPSSDDGLEHNKIQNGKAPRDPVTENCVQGEEKESSNDSTSVSAVASNMRDDEITQDENTVSTSLGHSKDENSKQTCIRIGTKTPKSDSCTPTNTTVEVVGSSGQNGDEKQNIVARKIVKMTKQPAKKKPPPSREKKVTRTILAILLAFIITWAPYNVMVLINTFCAPCIPNTVWTIGYWLCYINSTINPACYALCNATFKKTFKHLLMCHYKNIGATR.

A helical transmembrane segment spans residues Val-1 to Met-19. Residues Val-20 to Asn-33 are Cytoplasmic-facing. The helical transmembrane segment at Tyr-34 to Tyr-54 threads the bilayer. At Thr-55–Asp-71 the chain is on the extracellular side. Cys-70 and Cys-150 are disulfide-bonded. Residues Leu-72 to Phe-93 form a helical membrane-spanning segment. Positions Asp-94–Tyr-96 match the Important for signaling motif. Residues Asp-94–Met-113 are Cytoplasmic-facing. The helical transmembrane segment at Ala-114–Trp-136 threads the bilayer. Topologically, residues Gln-137–Ala-158 are extracellular. The chain crosses the membrane as a helical span at residues Ala-159–Ile-183. At Ser-184–Arg-361 the chain is on the cytoplasmic side. Residues Lys-192–Asp-329 are disordered. Ser-206 carries the phosphoserine modification. Over residues Gly-228–Val-244 the composition is skewed to basic and acidic residues. Composition is skewed to polar residues over residues Asn-258–Ala-267, Asp-278–Gly-287, and Ser-308–Asn-327. The helical transmembrane segment at Thr-362–Asn-384 threads the bilayer. Residues Thr-385–Pro-392 are Extracellular-facing. A disulfide bond links Cys-387 and Cys-390. The helical transmembrane segment at Asn-393–Leu-416 threads the bilayer. Positions Asn-410–Tyr-414 match the Important for signaling motif. The Cytoplasmic portion of the chain corresponds to Cys-417 to Arg-440. Phosphothreonine occurs at positions 420, 424, and 439.

The protein belongs to the G-protein coupled receptor 1 family. Muscarinic acetylcholine receptor subfamily. CHRM2 sub-subfamily. In terms of assembly, interacts with ARRB1 and ARRB2. Interacts with RACK1; the interaction regulates CHRM2 internalization. Phosphorylated in response to agonist treatment.

Its subcellular location is the cell membrane. It localises to the postsynaptic cell membrane. In terms of biological role, the muscarinic acetylcholine receptor mediates various cellular responses, including inhibition of adenylate cyclase, breakdown of phosphoinositides and modulation of potassium channels through the action of G proteins. Primary transducing effect is adenylate cyclase inhibition. Signaling promotes phospholipase C activity, leading to the release of inositol trisphosphate (IP3); this then triggers calcium ion release into the cytosol. This is Muscarinic acetylcholine receptor M2 (CHRM2) from Pan troglodytes (Chimpanzee).